Reading from the N-terminus, the 282-residue chain is S-formylglutathione hydrolase (282 aa).

Residue Lys4 is modified to N6-succinyllysine. Ser149 serves as the catalytic Charge relay system. N6-acetyllysine is present on Lys200. Catalysis depends on charge relay system residues Asp226 and His260.

It belongs to the esterase D family. In terms of assembly, homodimer.

Its subcellular location is the cytoplasm. It localises to the cytoplasmic vesicle. It catalyses the reaction S-formylglutathione + H2O = formate + glutathione + H(+). Serine hydrolase involved in the detoxification of formaldehyde. This is S-formylglutathione hydrolase (Esd) from Rattus norvegicus (Rat).